We begin with the raw amino-acid sequence, 872 residues long: DNA polymerase 1 (872 aa).

Belongs to the DNA polymerase type-B family.

It carries out the reaction DNA(n) + a 2'-deoxyribonucleoside 5'-triphosphate = DNA(n+1) + diphosphate. The chain is DNA polymerase 1 (pol-alpha) from Sulfurisphaera ohwakuensis.